A 195-amino-acid polypeptide reads, in one-letter code: Recombination protein RecR (195 aa).

The C4-type zinc finger occupies 56 to 71 (CRQCHSFSDDDICPIC). The region spanning 79-174 (SVLCVVETAA…KVTRIAQGIP (96 aa)) is the Toprim domain.

This sequence belongs to the RecR family.

Functionally, may play a role in DNA repair. It seems to be involved in an RecBC-independent recombinational process of DNA repair. It may act with RecF and RecO. This Psychrobacter sp. (strain PRwf-1) protein is Recombination protein RecR.